Here is a 197-residue protein sequence, read N- to C-terminus: CRISPR system CMR subunit Cmr7 1 (197 aa).

It belongs to the CRISPR system Cmr7 family. In terms of assembly, possible homodimer. Part of the CMR ribonucleoprotein complex, consisting of crRNA plus Cmr1/Cmr2/Cmr3/Cmr4/Cmr5/Cmr6 at 1:1 and possibly 3 Cmr7 dimers. A Cmr2/Cmr3/Cmr7 subcomplex without crRNA can also be isolated. It does not cleave target RNA.

Its subcellular location is the cytoplasm. CRISPR (clustered regularly interspaced short palindromic repeat) is an adaptive immune system that provides protection against mobile genetic elements (viruses, transposable elements and conjugative plasmids). CRISPR clusters contain spacers, sequences complementary to antecedent mobile elements, and target invading nucleic acids. CRISPR clusters are transcribed and processed into CRISPR RNA (crRNA). The CMR complex degrades RNA complementary to the crRNA (target RNA) within UA dinucleotides, generating 3'-OH and 5'-phosphate ends. Activity is dependent on the 8 nt long 5' tag in the crRNA, an unpaired 3' flag on the target RNA, and is stimulated by ATP. Some cleavage of the guide crRNA can also be observed. The polypeptide is CRISPR system CMR subunit Cmr7 1 (cmr7A) (Saccharolobus solfataricus (strain ATCC 35092 / DSM 1617 / JCM 11322 / P2) (Sulfolobus solfataricus)).